Here is a 319-residue protein sequence, read N- to C-terminus: ATP-dependent 6-phosphofructokinase (319 aa).

Glycine 11 is a binding site for ATP. ADP is bound at residue 21-25; sequence RAVTR. Residues 72–73 and 102–105 each bind ATP; these read RF and GDGS. A Mg(2+)-binding site is contributed by aspartate 103. 125-127 provides a ligand contact to substrate; that stretch reads SID. Aspartate 127 acts as the Proton acceptor in catalysis. Arginine 154 contributes to the ADP binding site. Substrate is bound by residues arginine 162 and 169–171; that span reads MGR. Residues 185–187 and 213–215 each bind ADP; these read GAD and KKH. Substrate contacts are provided by residues glutamate 222, arginine 243, and 249 to 252; that span reads HMQR.

It belongs to the phosphofructokinase type A (PFKA) family. ATP-dependent PFK group I subfamily. Prokaryotic clade 'B1' sub-subfamily. In terms of assembly, homotetramer. It depends on Mg(2+) as a cofactor.

The protein resides in the cytoplasm. The catalysed reaction is beta-D-fructose 6-phosphate + ATP = beta-D-fructose 1,6-bisphosphate + ADP + H(+). The protein operates within carbohydrate degradation; glycolysis; D-glyceraldehyde 3-phosphate and glycerone phosphate from D-glucose: step 3/4. Its activity is regulated as follows. Allosterically activated by ADP and other diphosphonucleosides, and allosterically inhibited by phosphoenolpyruvate. Functionally, catalyzes the phosphorylation of D-fructose 6-phosphate to fructose 1,6-bisphosphate by ATP, the first committing step of glycolysis. This is ATP-dependent 6-phosphofructokinase from Lactobacillus johnsonii (strain CNCM I-12250 / La1 / NCC 533).